We begin with the raw amino-acid sequence, 117 residues long: Carboxysome shell protein CcmK4 (117 aa).

A BMC domain is found at 5-91 (AVGSLETKGF…PHENVECVLP (87 aa)).

Belongs to the bacterial microcompartments protein family. CcmK subfamily. In terms of assembly, crystallizes as a homohexamer. Interacts stably with CcmK3, forming heterohexamers that can make dodecamers. Heterohexamers have a 1:2 CcmK3:CcmK4 stoichiometry. Upon expression in E.coli forms large aggregates.

Its subcellular location is the carboxysome. A probably essential, minor shell protein of the carboxysome, a polyhedral inclusion where RuBisCO (ribulose bisphosphate carboxylase, rbcL-rbcS) is sequestered. Hexamers form sheets that form the facets of the polyhedral carboxysome. In PCC 7418 there are several CcmK paralogs with presumably functional differences. This subunit can probably make both homohexamers and heterohexamers with CcmK3. Both hexamers can also make dodecamers, formation depends on buffer conditions. This chain is Carboxysome shell protein CcmK4, found in Halothece sp. (strain PCC 7418) (Synechococcus sp. (strain PCC 7418)).